A 206-amino-acid polypeptide reads, in one-letter code: LexA repressor (206 aa).

The H-T-H motif DNA-binding region spans 28–48; sequence VREICNAVGLSSTSTVHGHLS. Residues Ser-128 and Lys-166 each act as for autocatalytic cleavage activity in the active site.

Belongs to the peptidase S24 family. As to quaternary structure, homodimer.

The enzyme catalyses Hydrolysis of Ala-|-Gly bond in repressor LexA.. Represses a number of genes involved in the response to DNA damage (SOS response), including recA and lexA. In the presence of single-stranded DNA, RecA interacts with LexA causing an autocatalytic cleavage which disrupts the DNA-binding part of LexA, leading to derepression of the SOS regulon and eventually DNA repair. The polypeptide is LexA repressor (Ligilactobacillus salivarius (strain UCC118) (Lactobacillus salivarius)).